A 1416-amino-acid chain; its full sequence is DNA-directed RNA polymerase subunit beta' (1416 aa).

Positions 71, 73, 86, and 89 each coordinate Zn(2+). Mg(2+)-binding residues include Asp461, Asp463, and Asp465. Residues Cys815, Cys889, Cys896, and Cys899 each contribute to the Zn(2+) site.

This sequence belongs to the RNA polymerase beta' chain family. The RNAP catalytic core consists of 2 alpha, 1 beta, 1 beta' and 1 omega subunit. When a sigma factor is associated with the core the holoenzyme is formed, which can initiate transcription. Requires Mg(2+) as cofactor. The cofactor is Zn(2+).

It carries out the reaction RNA(n) + a ribonucleoside 5'-triphosphate = RNA(n+1) + diphosphate. Its function is as follows. DNA-dependent RNA polymerase catalyzes the transcription of DNA into RNA using the four ribonucleoside triphosphates as substrates. The polypeptide is DNA-directed RNA polymerase subunit beta' (Haemophilus influenzae (strain 86-028NP)).